Here is a 253-residue protein sequence, read N- to C-terminus: MLKTRIIPCLDVADGRVVKGVNFVGLRDAGDPVDAARAYDAAGADEICFLDIHATHENRGTMFDVVSRTAEQCFVPLTVGGGVRTHADVRALLLAGADKVSFNSAAVANPDVIAEAADRFGSQCIVCAIDAKTVEPGRWEIFTHGGRKPTGIDAVEFARLVTAKGAGEILLTSMDRDGTKSGFNLPLTRAIADAVDVPVIASGGVGTLDHLVEGVTEGHASAVLAASIFHFGEYTIREAKEHMAAAGIPMRLT.

Catalysis depends on residues Asp11 and Asp130.

Belongs to the HisA/HisF family. As to quaternary structure, heterodimer of HisH and HisF.

It localises to the cytoplasm. The catalysed reaction is 5-[(5-phospho-1-deoxy-D-ribulos-1-ylimino)methylamino]-1-(5-phospho-beta-D-ribosyl)imidazole-4-carboxamide + L-glutamine = D-erythro-1-(imidazol-4-yl)glycerol 3-phosphate + 5-amino-1-(5-phospho-beta-D-ribosyl)imidazole-4-carboxamide + L-glutamate + H(+). It participates in amino-acid biosynthesis; L-histidine biosynthesis; L-histidine from 5-phospho-alpha-D-ribose 1-diphosphate: step 5/9. Functionally, IGPS catalyzes the conversion of PRFAR and glutamine to IGP, AICAR and glutamate. The HisF subunit catalyzes the cyclization activity that produces IGP and AICAR from PRFAR using the ammonia provided by the HisH subunit. In Ruegeria pomeroyi (strain ATCC 700808 / DSM 15171 / DSS-3) (Silicibacter pomeroyi), this protein is Imidazole glycerol phosphate synthase subunit HisF.